We begin with the raw amino-acid sequence, 292 residues long: Phosphatidylglycerol--prolipoprotein diacylglyceryl transferase (292 aa).

4 helical membrane passes run 24-44 (ISVH…LLIA), 65-85 (FFIW…VLIY), 110-130 (GISG…AIIF), and 136-156 (QSFW…YVFG). An a 1,2-diacyl-sn-glycero-3-phospho-(1'-sn-glycerol)-binding site is contributed by arginine 157. Helical transmembrane passes span 192 to 212 (SQLF…ICLL), 219 to 239 (GTLL…CEYF), and 256 to 276 (GQIL…FVFV).

The protein belongs to the Lgt family.

The protein localises to the cell inner membrane. The enzyme catalyses L-cysteinyl-[prolipoprotein] + a 1,2-diacyl-sn-glycero-3-phospho-(1'-sn-glycerol) = an S-1,2-diacyl-sn-glyceryl-L-cysteinyl-[prolipoprotein] + sn-glycerol 1-phosphate + H(+). It participates in protein modification; lipoprotein biosynthesis (diacylglyceryl transfer). Functionally, catalyzes the transfer of the diacylglyceryl group from phosphatidylglycerol to the sulfhydryl group of the N-terminal cysteine of a prolipoprotein, the first step in the formation of mature lipoproteins. This is Phosphatidylglycerol--prolipoprotein diacylglyceryl transferase from Helicobacter hepaticus (strain ATCC 51449 / 3B1).